We begin with the raw amino-acid sequence, 597 residues long: Nuclear factor erythroid 2-related factor 2 (597 aa).

The DLG motif motif lies at 29 to 31; the sequence is DLG. At serine 40 the chain carries Phosphoserine; by PKC. The ETGE motif signature appears at 79-82; sequence ETGE. Serine 207 carries the post-translational modification Phosphoserine. The segment at 327-440 is disordered; it reads TMEFNDSDSG…APFTKDKHSS (114 aa). Residues 333–345 show a composition bias toward polar residues; the sequence is SDSGISLNTSPSR. Residues lysine 454, lysine 464, and lysine 479 are each glycosylated (N-linked (Glc) (glycation) lysine). In terms of domain architecture, bZIP spans 489–552; that stretch reads LIRDIRRRGK…HLLKRRLSTL (64 aa). Arginine 491 is a glycosylation site (N-linked (Glc) (glycation) arginine). The basic motif stretch occupies residues 491–510; it reads RDIRRRGKNKVAAQNCRKRK. Residues 514 to 521 form a leucine-zipper region; it reads IVELEQDL. A glycan (N-linked (Glc) (glycation) arginine) is linked at arginine 561. Residues 563-597 form a disordered region; the sequence is EDGKPYSPSEYSLQQTRDGNVFLVPKSKKPDTKKN. N-linked (Glc) (glycation) lysine glycosylation occurs at lysine 566. The span at 571 to 580 shows a compositional bias: polar residues; it reads SEYSLQQTRD. The segment at 583–588 is mediates interaction with CHD6 and is necessary to activate transcription; sequence VFLVPK. Residues lysine 588 and lysine 591 each carry the N6-acetyllysine; by CREBBP modification.

It belongs to the bZIP family. CNC subfamily. Heterodimer; heterodimerizes with small Maf proteins. Interacts (via the bZIP domain) with MAFG and MAFK; required for binding to antioxidant response elements (AREs) on DNA. Interacts with KEAP1; the interaction is direct and promotes ubiquitination by the BCR(KEAP1) E3 ubiquitin ligase complex. Forms a ternary complex with PGAM5 and KEAP1. Interacts with EEF1D at heat shock promoter elements (HSE). Interacts via its leucine-zipper domain with the coiled-coil domain of PMF1. Interacts with CHD6; involved in activation of the transcription. Interacts with ESRRB; represses NFE2L2 transcriptional activity. Interacts with MOTS-c, a peptide produced by the mitochondrially encoded 12S rRNA MT-RNR1; the interaction occurs in the nucleus following metabolic stress. Ubiquitinated in the cytoplasm by the BCR(KEAP1) E3 ubiquitin ligase complex leading to its degradation. In response to oxidative stress, electrophile metabolites, such as sulforaphane, modify KEAP1, leading to inhibit activity of the BCR(KEAP1) complex, promoting NFE2L2/NRF2 nuclear accumulation and activity. In response to autophagy, the BCR(KEAP1) complex is inactivated. Post-translationally, phosphorylated by EIF2AK3/PERK following unfolded protein response (UPR), promoting dissociation from its cytoplasmic inhibitor KEAP1, followed by its translocation into the nucleus. Phosphorylation of Ser-40 by PKC in response to oxidative stress dissociates NFE2L2 from its cytoplasmic inhibitor KEAP1, promoting its translocation into the nucleus. In terms of processing, acetylation at Lys-588 and Lys-591 increases nuclear localization whereas deacetylation by SIRT1 enhances cytoplasmic presence. Glycation impairs transcription factor activity by preventing heterodimerization with small Maf proteins. Deglycation by FN3K restores activity. In terms of tissue distribution, widely expressed. Highest expression in liver, skeletal muscle, luminal cells of the stomach and intestine, lining of the bronchi and alveoli, and in renal tubules; followed by heart, spleen, testis and brain.

The protein localises to the cytoplasm. The protein resides in the cytosol. It localises to the nucleus. In terms of biological role, transcription factor that plays a key role in the response to oxidative stress: binds to antioxidant response (ARE) elements present in the promoter region of many cytoprotective genes, such as phase 2 detoxifying enzymes, and promotes their expression, thereby neutralizing reactive electrophiles. In normal conditions, ubiquitinated and degraded in the cytoplasm by the BCR(KEAP1) complex. In response to oxidative stress, electrophile metabolites inhibit activity of the BCR(KEAP1) complex, promoting nuclear accumulation of NFE2L2/NRF2, heterodimerization with one of the small Maf proteins and binding to ARE elements of cytoprotective target genes. The NFE2L2/NRF2 pathway is also activated in response to selective autophagy: autophagy promotes interaction between KEAP1 and SQSTM1/p62 and subsequent inactivation of the BCR(KEAP1) complex, leading to NFE2L2/NRF2 nuclear accumulation and expression of cytoprotective genes. The NFE2L2/NRF2 pathway is also activated during the unfolded protein response (UPR), contributing to redox homeostasis and cell survival following endoplasmic reticulum stress. May also be involved in the transcriptional activation of genes of the beta-globin cluster by mediating enhancer activity of hypersensitive site 2 of the beta-globin locus control region. Also plays an important role in the regulation of the innate immune response. It is a critical regulator of the innate immune response and survival during sepsis by maintaining redox homeostasis and restraint of the dysregulation of pro-inflammatory signaling pathways like MyD88-dependent and -independent and TNF-alpha signaling. Suppresses macrophage inflammatory response by blocking pro-inflammatory cytokine transcription and the induction of IL6. Binds to the proximity of pro-inflammatory genes in macrophages and inhibits RNA Pol II recruitment. The inhibition is independent of the Nrf2-binding motif and reactive oxygen species level. Represses antiviral cytosolic DNA sensing by suppressing the expression of the adapter protein STING1 and decreasing responsiveness to STING1 agonists while increasing susceptibility to infection with DNA viruses. The chain is Nuclear factor erythroid 2-related factor 2 from Mus musculus (Mouse).